The sequence spans 72 residues: Alpha-conotoxin SII (72 aa).

A signal peptide spans 1–21 (MGMRMMFTVFLLVVLATTVVS). A propeptide spanning residues 22–50 (FPSDRASDGRDDEAKDERSDMHESDRNGR) is cleaved from the precursor. The tract at residues 23–51 (PSDRASDGRDDEAKDERSDMHESDRNGRG) is disordered. A compositionally biased stretch (basic and acidic residues) spans 26–49 (RASDGRDDEAKDERSDMHESDRNG). 3 cysteine pairs are disulfide-bonded: C52-C68, C53-C58, and C54-C64. A propeptide spanning residues 70–72 (RTL) is cleaved from the precursor.

It belongs to the conotoxin A superfamily. Post-translationally, the disulfide bond Cys-52-Cys-68 (Cys I-VI), which corresponds to an extra disulfide bond when compared to the cysteine framework I (CC-C-C), does contribute to conotoxin SII stability and imparts a unique binding mode at the nAChR. As to expression, expressed by the venom duct.

It localises to the secreted. Its function is as follows. Alpha-conotoxins act on postsynaptic membranes, they bind to the nicotinic acetylcholine receptors (nAChR) and thus inhibit them. This toxin potently inhibits the rodent muscle nAChR (IC(50)=120 nM (adult subtype, alpha-1-beta-1-delta-epsilon/CHRNA1-CHRNB1-CHRND-CHRNE) and IC(50)=370 nM (fetal subtype, alpha-1-beta-1-gamma-delta/CHRNA1-CHRNB1-CHRNG-CHRND)) and weakly inhibits neuronal nAChRs. In contrast to alpha-conotoxins bearing 2 disulfide bonds (framework I), this conotoxin acts via a unique binding mode with the helix and the N- and C-termini buried in the binding pocket of muscle nAChRs. The sequence is that of Alpha-conotoxin SII from Conus striatus (Striated cone).